The sequence spans 316 residues: Beta-ketoacyl-[acyl-carrier-protein] synthase III 1 (316 aa).

Residues Cys112 and His243 contribute to the active site. The ACP-binding stretch occupies residues Gln244–Arg248. The active site involves Asn273.

This sequence belongs to the thiolase-like superfamily. FabH family. As to quaternary structure, homodimer.

It localises to the cytoplasm. It carries out the reaction malonyl-[ACP] + acetyl-CoA + H(+) = 3-oxobutanoyl-[ACP] + CO2 + CoA. It participates in lipid metabolism; fatty acid biosynthesis. Catalyzes the condensation reaction of fatty acid synthesis by the addition to an acyl acceptor of two carbons from malonyl-ACP. Catalyzes the first condensation reaction which initiates fatty acid synthesis and may therefore play a role in governing the total rate of fatty acid production. Possesses both acetoacetyl-ACP synthase and acetyl transacylase activities. Its substrate specificity determines the biosynthesis of branched-chain and/or straight-chain of fatty acids. The protein is Beta-ketoacyl-[acyl-carrier-protein] synthase III 1 of Vibrio vulnificus (strain CMCP6).